Here is a 307-residue protein sequence, read N- to C-terminus: Auxiliary protein GraX (307 aa).

In terms of assembly, homodimer. Interacts with GraR and GraS.

Functionally, plays a role in resistance against cationic antimicrobial peptides (CAMPs). Facilitates the activation of GraS to transduce the signal to GraR. The polypeptide is Auxiliary protein GraX (graX) (Staphylococcus aureus (strain NCTC 8325 / PS 47)).